A 556-amino-acid chain; its full sequence is Formate--tetrahydrofolate ligase (556 aa).

65-72 (TPAGEGKS) contributes to the ATP binding site.

Belongs to the formate--tetrahydrofolate ligase family.

It catalyses the reaction (6S)-5,6,7,8-tetrahydrofolate + formate + ATP = (6R)-10-formyltetrahydrofolate + ADP + phosphate. The protein operates within one-carbon metabolism; tetrahydrofolate interconversion. The sequence is that of Formate--tetrahydrofolate ligase from Streptococcus agalactiae serotype III (strain NEM316).